The following is a 62-amino-acid chain: Protein DsrB (62 aa).

Belongs to the DsrB family.

The polypeptide is Protein DsrB (Shigella flexneri serotype 5b (strain 8401)).